A 338-amino-acid chain; its full sequence is Malate dehydrogenase, mitochondrial (338 aa).

Residues 1–24 (MLSALARPASAVLRRSFSTSAQNN) constitute a mitochondrion transit peptide. Residues 31–37 (GASGGIG) and Asp-57 contribute to the NAD(+) site. O-linked (GlcNAc) serine glycosylation is present at Ser-33. N6-acetyllysine; alternate is present on residues Lys-78 and Lys-91. Residues Lys-78 and Lys-91 each carry the N6-succinyllysine; alternate modification. Substrate-binding residues include Arg-104 and Arg-110. NAD(+)-binding positions include Asn-117 and 140 to 142 (IAN). Asn-142 contacts substrate. An N6-acetyllysine modification is found at Lys-165. Arg-176 lines the substrate pocket. Residue Lys-185 is modified to N6-acetyllysine; alternate. Lys-185 carries the N6-succinyllysine; alternate modification. The Proton acceptor role is filled by His-200. The residue at position 203 (Lys-203) is an N6-succinyllysine. N6-acetyllysine; alternate is present on residues Lys-215 and Lys-239. N6-succinyllysine; alternate is present on residues Lys-215 and Lys-239. N6-malonyllysine; alternate is present on Lys-239. Ser-246 bears the Phosphoserine mark. NAD(+) is bound at residue Met-251. N6-succinyllysine is present on Lys-269. An N6-acetyllysine; alternate mark is found at Lys-296, Lys-301, Lys-307, Lys-314, and Lys-324. 5 positions are modified to N6-succinyllysine; alternate: Lys-296, Lys-301, Lys-307, Lys-314, and Lys-324. The residue at position 307 (Lys-307) is an N6-malonyllysine; alternate. Position 326 is a phosphoserine (Ser-326). N6-acetyllysine; alternate is present on residues Lys-328, Lys-329, and Lys-335. Residue Lys-328 is modified to N6-succinyllysine; alternate. The residue at position 329 (Lys-329) is an N6-malonyllysine; alternate. N6-succinyllysine; alternate is present on Lys-335.

It belongs to the LDH/MDH superfamily. MDH type 1 family. As to quaternary structure, homodimer. In terms of processing, acetylation is enhanced after treatment either with trichostin A (TCA) or with nicotinamide (NAM) with the appearance of tri- and tetraacetylations. Glucose also increases acetylation.

Its subcellular location is the mitochondrion matrix. The catalysed reaction is (S)-malate + NAD(+) = oxaloacetate + NADH + H(+). With respect to regulation, enzyme activity is enhanced by acetylation. This is Malate dehydrogenase, mitochondrial (MDH2) from Pongo abelii (Sumatran orangutan).